Consider the following 522-residue polypeptide: Serine/threonine-protein kinase pak-2 (522 aa).

In terms of domain architecture, CRIB spans 16–29 (ISTPSNFEHRIHAG). The span at 183–204 (TTTPQLQPKSPSTPQAMRQQPK) shows a compositional bias: polar residues. A disordered region spans residues 183–208 (TTTPQLQPKSPSTPQAMRQQPKCTEG). One can recognise a Protein kinase domain in the interval 231–482 (LTDYKQIGEG…AKDLLRHPFF (252 aa)). ATP contacts are provided by residues 237-245 (IGEGSTGVV) and lysine 260. The active-site Proton acceptor is the aspartate 350.

It belongs to the protein kinase superfamily. STE Ser/Thr protein kinase family. STE20 subfamily. Requires Mg(2+) as cofactor. It depends on Mn(2+) as a cofactor. Expressed in pharynx, vulva and spermatheca. Unlike other p21-activated kinases, expression is not detected in neurons.

It carries out the reaction L-seryl-[protein] + ATP = O-phospho-L-seryl-[protein] + ADP + H(+). The catalysed reaction is L-threonyl-[protein] + ATP = O-phospho-L-threonyl-[protein] + ADP + H(+). Functionally, serine/threonine-protein kinase which plays a redundant role with pak-1 in embryogenesis but, in contrast to pak-1, is not involved in commissural axon guidance of ventral cord motoneurons or in distal tip cell (DTC) migration. The polypeptide is Serine/threonine-protein kinase pak-2 (Caenorhabditis elegans).